The primary structure comprises 368 residues: Protein PXR1 (368 aa).

A disordered region spans residues 1-24 (MGLAGAKNKRKLGNDPNNTKWSRN). A compositionally biased stretch (polar residues) spans 15 to 24 (DPNNTKWSRN). The 55-residue stretch at 25 to 79 (TDTFGQKILRAQGWQPGEYLGAKDAAHAEWHTEANTTHIRVTLKDDTLGLGAKRN) folds into the G-patch domain. The interval 144–337 (TPDEEAEEIP…GYSTPIPTGS (194 aa)) is disordered. Basic and acidic residues predominate over residues 176–186 (RRSDKEDDKLG). Composition is skewed to basic residues over residues 187–196 (KKEKKSKKRK) and 257–277 (DKKR…KKEK). Residues 310-337 (PSSAPTPTDSNSSTPTGSGYSTPIPTGS) show a composition bias toward low complexity.

Belongs to the PINX1 family.

Its subcellular location is the nucleus. The protein localises to the nucleolus. Functionally, involved in rRNA-processing at A0, A1 and A2 sites and negatively regulates telomerase. The chain is Protein PXR1 (PXR1) from Chaetomium globosum (strain ATCC 6205 / CBS 148.51 / DSM 1962 / NBRC 6347 / NRRL 1970) (Soil fungus).